A 306-amino-acid chain; its full sequence is Acetylglutamate kinase (306 aa).

Substrate contacts are provided by residues 68 to 69, Arg-90, and Asn-195; that span reads GG.

It belongs to the acetylglutamate kinase family. ArgB subfamily.

It localises to the cytoplasm. It catalyses the reaction N-acetyl-L-glutamate + ATP = N-acetyl-L-glutamyl 5-phosphate + ADP. The protein operates within amino-acid biosynthesis; L-arginine biosynthesis; N(2)-acetyl-L-ornithine from L-glutamate: step 2/4. Functionally, catalyzes the ATP-dependent phosphorylation of N-acetyl-L-glutamate. This Chromohalobacter salexigens (strain ATCC BAA-138 / DSM 3043 / CIP 106854 / NCIMB 13768 / 1H11) protein is Acetylglutamate kinase.